Here is a 319-residue protein sequence, read N- to C-terminus: Bidirectional sugar transporter SWEET15 (319 aa).

Residues 1-10 (MAFMSMERST) lie on the Extracellular side of the membrane. A helical membrane pass occupies residues 11–31 (WAFTFGILGNLISLMVFLSPL). Positions 13 to 99 (FTFGILGNLI…AMYLAYAPKS (87 aa)) constitute a MtN3/slv 1 domain. The Cytoplasmic segment spans residues 32-50 (PTFYRVYRKKSTEGFQSTP). A helical transmembrane segment spans residues 51-71 (YVVTLFSCMLWMYYAFVKSGA). Residue Glu72 is a topological domain, extracellular. A helical membrane pass occupies residues 73–93 (LLVTINGVGCVIETVYLAMYL). At 94-106 (AYAPKSARMLTAK) the chain is on the cytoplasmic side. The helical transmembrane segment at 107-127 (MLLGLNIGLFGVIALVTLLLS) threads the bilayer. The Extracellular segment spans residues 128–134 (RGELRVH). The helical transmembrane segment at 135–155 (VLGWICVAVSLSVFAAPLSII) threads the bilayer. The region spanning 135–219 (VLGWICVAVS…ALYMAYRSKK (85 aa)) is the MtN3/slv 2 domain. At 156 to 167 (RLVIRTKSVEFM) the chain is on the cytoplasmic side. The chain crosses the membrane as a helical span at residues 168-188 (PFSLSFFLVLSAVIWFLYGLL). The Extracellular segment spans residues 189-191 (KKD). The helical transmembrane segment at 192 to 212 (VFVALPNVLGFVFGVAQMALY) threads the bilayer. Topologically, residues 213 to 319 (MAYRSKKPLV…KPDMAIVVEV (107 aa)) are cytoplasmic.

The protein belongs to the SWEET sugar transporter family. As to quaternary structure, forms homooligomers and/or heterooligomers.

The protein localises to the cell membrane. Its function is as follows. Mediates both low-affinity uptake and efflux of sugar across the plasma membrane. Confers blight susceptibility. Confers TAL effector-mediated susceptibility to Xanthomonas oryzae pv. oryzae. In Oryza sativa subsp. japonica (Rice), this protein is Bidirectional sugar transporter SWEET15 (SWEET15).